A 261-amino-acid polypeptide reads, in one-letter code: tRNA pseudouridine synthase A 2 (261 aa).

Asp59 functions as the Nucleophile in the catalytic mechanism. Tyr117 is a substrate binding site.

This sequence belongs to the tRNA pseudouridine synthase TruA family. In terms of assembly, homodimer.

The catalysed reaction is uridine(38/39/40) in tRNA = pseudouridine(38/39/40) in tRNA. Functionally, formation of pseudouridine at positions 38, 39 and 40 in the anticodon stem and loop of transfer RNAs. This Desulfotalea psychrophila (strain LSv54 / DSM 12343) protein is tRNA pseudouridine synthase A 2.